The chain runs to 80 residues: Exodeoxyribonuclease 7 small subunit (80 aa).

The protein belongs to the XseB family. In terms of assembly, heterooligomer composed of large and small subunits.

The protein resides in the cytoplasm. It catalyses the reaction Exonucleolytic cleavage in either 5'- to 3'- or 3'- to 5'-direction to yield nucleoside 5'-phosphates.. In terms of biological role, bidirectionally degrades single-stranded DNA into large acid-insoluble oligonucleotides, which are then degraded further into small acid-soluble oligonucleotides. The sequence is that of Exodeoxyribonuclease 7 small subunit from Halalkalibacterium halodurans (strain ATCC BAA-125 / DSM 18197 / FERM 7344 / JCM 9153 / C-125) (Bacillus halodurans).